We begin with the raw amino-acid sequence, 161 residues long: Nucleotide-binding protein Rfer_2692 (161 aa).

This sequence belongs to the YajQ family.

Nucleotide-binding protein. This is Nucleotide-binding protein Rfer_2692 from Albidiferax ferrireducens (strain ATCC BAA-621 / DSM 15236 / T118) (Rhodoferax ferrireducens).